The primary structure comprises 262 residues: Homeobox-leucine zipper protein HOX24 (262 aa).

2 disordered regions span residues 44–68 (AAGR…RKRR) and 162–189 (LNER…NSVM). Gly residues predominate over residues 46–62 (GRGGGDGDGGGGGGGGG). The homeobox DNA-binding region spans 61–122 (GGGERKRRFT…NKRARWRSKQ (62 aa)). The leucine-zipper stretch occupies residues 121–165 (KQIEHDYAALRAQYDALHARVESLRQEKLALAAQVDELRGKLNER).

This sequence belongs to the HD-ZIP homeobox family. Class I subfamily. In terms of tissue distribution, expressed in roots and panicles.

The protein localises to the nucleus. Functionally, probable transcription factor. The chain is Homeobox-leucine zipper protein HOX24 (HOX24) from Oryza sativa subsp. indica (Rice).